Here is a 178-residue protein sequence, read N- to C-terminus: Fluoride-specific ion channel FluC 2 (178 aa).

The next 4 helical transmembrane spans lie at 25-45 (PDIH…GTAI), 63-83 (FVAN…LAGA), 97-117 (GLGM…LEGF), and 129-149 (IAYL…GVWA). 2 residues coordinate Na(+): Gly104 and Ser107.

It belongs to the fluoride channel Fluc/FEX (TC 1.A.43) family.

The protein localises to the cell membrane. It catalyses the reaction fluoride(in) = fluoride(out). Na(+) is not transported, but it plays an essential structural role and its presence is essential for fluoride channel function. Functionally, fluoride-specific ion channel. Important for reducing fluoride concentration in the cell, thus reducing its toxicity. This Bifidobacterium longum (strain NCC 2705) protein is Fluoride-specific ion channel FluC 2.